A 161-amino-acid chain; its full sequence is Cyclic pyranopterin monophosphate synthase (161 aa).

Substrate is bound by residues 78 to 80 and 116 to 117; these read LCH and ME. Residue aspartate 131 is part of the active site.

Belongs to the MoaC family. As to quaternary structure, homohexamer; trimer of dimers.

It catalyses the reaction (8S)-3',8-cyclo-7,8-dihydroguanosine 5'-triphosphate = cyclic pyranopterin phosphate + diphosphate. It participates in cofactor biosynthesis; molybdopterin biosynthesis. Its function is as follows. Catalyzes the conversion of (8S)-3',8-cyclo-7,8-dihydroguanosine 5'-triphosphate to cyclic pyranopterin monophosphate (cPMP). This chain is Cyclic pyranopterin monophosphate synthase, found in Bordetella pertussis (strain Tohama I / ATCC BAA-589 / NCTC 13251).